A 535-amino-acid chain; its full sequence is KNR4/SMI1 homolog (535 aa).

Residues 354-363 (ERKLPEEPKR) are compositionally biased toward basic and acidic residues. The tract at residues 354–535 (ERKLPEEPKR…LKDDFENVAL (182 aa)) is disordered. 3 stretches are compositionally biased toward polar residues: residues 364–384 (TVSS…QETA), 397–407 (TSLSVDNTGTK), and 456–469 (ESTN…TSQE). Residues 474-483 (TSEKPEEKPK) are compositionally biased toward basic and acidic residues. Residues 484–494 (KQSKKASKKKG) show a composition bias toward basic residues. Composition is skewed to basic and acidic residues over residues 495–509 (KKDE…TKEP) and 524–535 (EKLKDDFENVAL).

This sequence belongs to the KNR4/SMI1 family.

This Kluyveromyces lactis (strain ATCC 8585 / CBS 2359 / DSM 70799 / NBRC 1267 / NRRL Y-1140 / WM37) (Yeast) protein is KNR4/SMI1 homolog.